The primary structure comprises 950 residues: Oxysterol-binding protein-related protein 1 (950 aa).

Residues 1 to 237 (MNTEAEQQLL…NKVVHKALKR (237 aa)) are interaction with RAB7A. 3 ANK repeats span residues 47 to 76 (LGWTPLHLACYFGHKQVVEDLLKAGAKVNM), 80 to 109 (MGDTPLHRAAFTGRKELVLLLLEYDADSTV), and 175 to 204 (LGNTPLHCAAYRAHKQCVLKLLRSGADPSL). The 100-residue stretch at 235–334 (LKRYEGPLWK…WLEAIEEHSA (100 aa)) folds into the PH domain. The stretch at 430–463 (NFKLEQEQEKNKILSEALETLATEHHELERSLVE) forms a coiled coil. Positions 469 to 483 (SILSEEEFYDALSGS) match the FFAT motif. Serine 499 bears the Phosphoserine mark. 2 disordered regions span residues 502 to 530 (ENEVPGSSGKHRMSEGKDCGGGDALSNGI) and 795 to 821 (KKNTEEKKNSKQTSSSEESDEMPVPDS). Positions 879-913 (RAMENGEIDLASEEKKRLEEKQRAARKNRSKSEED) form a coiled coil.

The protein belongs to the OSBP family. In terms of assembly, interacts (via FFAT motif) with VAPA and VAPB. Interacts with the GTP-bound form of RAB7A. Interacts with OAS1B. Interacts (via FFAT motif) with MOSPD2 (via MSP domain). As to expression, ubiquitous.

Its subcellular location is the late endosome. Its function is as follows. Binds phospholipids; exhibits strong binding to phosphatidic acid and weak binding to phosphatidylinositol 3-phosphate. Stabilizes GTP-bound RAB7A on late endosomes/lysosomes and alters functional properties of late endocytic compartments via its interaction with RAB7A. Binds 25-hydroxycholesterol and cholesterol. This is Oxysterol-binding protein-related protein 1 from Mus musculus (Mouse).